Here is a 785-residue protein sequence, read N- to C-terminus: MDRVLSRADKERLLELLKLPRQLWGDFGRMQQAYKQQSLLLHPDKGGSHALMQELNSLWGTFKTEVYNLRMNLGGTGFQGSPPRTAERGTEESGHSPLHDDYWSFSYGSKYFTREWNDFFRKWDPSYQSPPKTAESSEQPDLFCYEEPLLSPNPSSPTDTPAHTAGRRRNPCVAEPDDSISPDPPRTPVSRKRPRPAGATGGGGGGVHANGGSVFGHPTGGTSTPAHPPPYHSQGGSESMGGSDSSGFAEGSFRSDPRCESENESYSQSCSQSSFNATPPKKAREDPAPSDFPSSLTGYLSHAIYSNKTFPAFLVYSTKEKCKQLYDTIGKFRPEFKCLVHYEEGGMLFFLTMTKHRVSAVKNYCSKLCRSFLMCKAVTKPMECYQVVTAAPFQLITENKPGLHQFEFTDEPEEQKAVDWIMVADFALENNLDDPLLIMGYYLDFAKEVPSCIKCSKEETRLQIHWKNHRKHAENADLFLNCKAQKTICQQAAASLASRRLKLVECTRSQLLKERLQQSLLRLKELGSSDALLYLAGVAWYQCLLEDFPQTLFKMLKLLTENVPKRRNILFRGPVNSGKTGLAAALISLLGGKSLNINCPADKLAFELGVAQDQFVVCFEDVKGQIALNKQLQPGMGVANLDNLRTTWNGSVKVNLEKKHSNKRSQLFPPCVCTMNEYLLPQTVWARFHMVLDFTCKPHLAQSLEKCEFLQRERIIQSGDTLALLLIWNFTSDVFDPDIQGLVKEVRDQFASECSYSLFCDILCNVQEGDDPLKDICDIAEYTVY.

Met1 is subject to N-acetylmethionine; by host. Residues 12 to 75 (RLLELLKLPR…VYNLRMNLGG (64 aa)) form the J domain. 2 disordered regions span residues 74–97 (GGTG…GHSP) and 145–291 (YEEP…APSD). A compositionally biased stretch (basic and acidic residues) spans 85–97 (TAERGTEESGHSP). Residues 142-146 (LFCYE) carry the LXCXE motif motif. The span at 148–161 (PLLSPNPSSPTDTP) shows a compositional bias: low complexity. The segment covering 199–209 (ATGGGGGGVHA) has biased composition (gly residues). Low complexity-rich tracts occupy residues 233-247 (SQGG…DSSG) and 264-274 (ESYSQSCSQSS). Phosphothreonine; by host is present on Thr278. The Nuclear localization signal signature appears at 279–286 (PPKKARED). The segment at residues 293–406 (PSSLTGYLSH…TENKPGLHQF (114 aa)) is a DNA-binding region (T-ag OBD). The T-ag D1-type zinc finger occupies 415 to 508 (QKAVDWIMVA…RRLKLVECTR (94 aa)). Zn(2+)-binding residues include Cys452, Cys455, His465, and His469. The SF3 helicase domain maps to 547-707 (DFPQTLFKML…PHLAQSLEKC (161 aa)). 573–580 (GPVNSGKT) contributes to the ATP binding site.

In terms of assembly, forms homohexamers in the presence of ATP. Interacts with host HDAC1. Interacts (via LXCXE domain) with host RB1; the interaction induces the aberrant dissociation of RB1-E2F1 complex thereby disrupting RB1's activity. Interacts (via LXCXE domain) with host pRB-related proteins RBL1 and RBL2. Interacts (via C-terminus) with host TOP1 and POLA1 allowing DNA replication. Interacts with host preinitiation complex components TBP, TFIIA and TFIID to regulate transcription initiation. Requires Mg(2+) as cofactor. Phosphorylated on both serine and threonine residues. Small t antigen inhibits the dephosphorylation by the AC form of PP2A. Post-translationally, O-Glycosylated near the C-terminal region. In terms of processing, acetylated by CBP in a TP53-dependent manner.

Its subcellular location is the host nucleus. It carries out the reaction Couples ATP hydrolysis with the unwinding of duplex DNA by translocating in the 3'-5' direction.. It catalyses the reaction ATP + H2O = ADP + phosphate + H(+). Functionally, isoform large T antigen is a key early protein essential for both driving viral replication and inducing cellular transformation. Plays a role in viral genome replication by driving entry of quiescent cells into the cell cycle and by autoregulating the synthesis of viral early mRNA. Displays highly oncogenic activities by corrupting the host cellular checkpoint mechanisms that guard cell division and the transcription, replication, and repair of DNA. Participates in the modulation of cellular gene expression preceeding viral DNA replication. This step involves binding to host key cell cycle regulators retinoblastoma protein RB1/pRb and TP53. Induces the disassembly of host E2F1 transcription factors from RB1, thus promoting transcriptional activation of E2F1-regulated S-phase genes. Inhibits host TP53 binding to DNA, abrogating the ability of TP53 to stimulate gene expression. Plays the role of a TFIID-associated factor (TAF) in transcription initiation for all three RNA polymerases, by stabilizing the TBP-TFIIA complex on promoters. Initiates viral DNA replication and unwinding via interactions with the viral origin of replication. Binds two adjacent sites in the SV40 origin. The replication fork movement is facilitated by Large T antigen helicase activity. Has processive 3'-5' DNA helicase activity which requires a short 3' single-stranded region and ATP. Activates the transcription of viral late mRNA, through host TBP and TFIIA stabilization. Interferes with histone deacetylation mediated by HDAC1, leading to activation of transcription. In Mus musculus (Mouse), this protein is Large T antigen.